Here is a 371-residue protein sequence, read N- to C-terminus: Aminomethyltransferase (371 aa).

Belongs to the GcvT family. The glycine cleavage system is composed of four proteins: P, T, L and H.

The enzyme catalyses N(6)-[(R)-S(8)-aminomethyldihydrolipoyl]-L-lysyl-[protein] + (6S)-5,6,7,8-tetrahydrofolate = N(6)-[(R)-dihydrolipoyl]-L-lysyl-[protein] + (6R)-5,10-methylene-5,6,7,8-tetrahydrofolate + NH4(+). In terms of biological role, the glycine cleavage system catalyzes the degradation of glycine. The chain is Aminomethyltransferase from Nitrosococcus oceani (strain ATCC 19707 / BCRC 17464 / JCM 30415 / NCIMB 11848 / C-107).